Consider the following 357-residue polypeptide: Uroporphyrinogen decarboxylase (357 aa).

Substrate is bound by residues 27–31 (RQAGR), D77, Y154, T209, and H327.

This sequence belongs to the uroporphyrinogen decarboxylase family. In terms of assembly, homodimer.

Its subcellular location is the cytoplasm. It catalyses the reaction uroporphyrinogen III + 4 H(+) = coproporphyrinogen III + 4 CO2. It participates in porphyrin-containing compound metabolism; protoporphyrin-IX biosynthesis; coproporphyrinogen-III from 5-aminolevulinate: step 4/4. Functionally, catalyzes the decarboxylation of four acetate groups of uroporphyrinogen-III to yield coproporphyrinogen-III. The polypeptide is Uroporphyrinogen decarboxylase (Proteus mirabilis (strain HI4320)).